Reading from the N-terminus, the 224-residue chain is MAETAPVAAPDVAAAPTPAKAAPAKKPKKAAGGAKARKPAGPSVTELITKAVSASKERKGLSLAALKKALAAGGYDVEKSNSRIKLGLKSLVSKGTLVQTKGTGASGSFRLSKKSGDVKEKAPKKKTPAAKPKKPAAKKPAAAAKKPKKAVAVKKSPKKAKKPAAAATKKAAKSPKKVTKAAKPKKAVAVKSPAKAKAVKPKAAKPKATKPKAAKAKKAAPKKK.

Composition is skewed to low complexity over residues 1–22 (MAETAPVAAPDVAAAPTPAKAA) and 30–42 (AAGGAKARKPAGP). 2 disordered regions span residues 1–43 (MAET…AGPS) and 99–224 (QTKG…PKKK). Residues 40 to 113 (AGPSVTELIT…GASGSFRLSK (74 aa)) enclose the H15 domain. Basic residues-rich tracts occupy residues 122–137 (APKKKTPAAKPKKPAA), 145–162 (KKPKKAVAVKKSPKKAKK), 170–188 (KAAKSPKKVTKAAKPKKAV), and 197–224 (KAVKPKAAKPKATKPKAAKAKKAAPKKK).

The protein belongs to the histone H1/H5 family.

It localises to the nucleus. The protein localises to the chromosome. Functionally, histones H1 are necessary for the condensation of nucleosome chains into higher-order structures. The sequence is that of Histone H1.03 from Gallus gallus (Chicken).